The primary structure comprises 342 residues: Tetraacyldisaccharide 4'-kinase (342 aa).

68 to 75 (TVGGTGKT) contacts ATP.

Belongs to the LpxK family.

The enzyme catalyses a lipid A disaccharide + ATP = a lipid IVA + ADP + H(+). It functions in the pathway glycolipid biosynthesis; lipid IV(A) biosynthesis; lipid IV(A) from (3R)-3-hydroxytetradecanoyl-[acyl-carrier-protein] and UDP-N-acetyl-alpha-D-glucosamine: step 6/6. In terms of biological role, transfers the gamma-phosphate of ATP to the 4'-position of a tetraacyldisaccharide 1-phosphate intermediate (termed DS-1-P) to form tetraacyldisaccharide 1,4'-bis-phosphate (lipid IVA). In Burkholderia thailandensis (strain ATCC 700388 / DSM 13276 / CCUG 48851 / CIP 106301 / E264), this protein is Tetraacyldisaccharide 4'-kinase.